Consider the following 735-residue polypeptide: ATP-dependent RNA helicase dbp4 (735 aa).

The segment at 1-24 is disordered; that stretch reads MPKNRTGRSREAREKKRKEEEEEI. Residues 8 to 19 show a composition bias toward basic and acidic residues; that stretch reads RSREAREKKRKE. A Q motif motif is present at residues 39 to 67; sequence DHFAELPLTQPTKSALKNAHFITLTEIQK. Residues 70–244 form the Helicase ATP-binding domain; that stretch reads IPSALKGRDI…RLSLQNPDFI (175 aa). 83-90 provides a ligand contact to ATP; it reads AKTGSGKT. A DEAD box motif is present at residues 192–195; that stretch reads DEAD. The region spanning 270–424 is the Helicase C-terminal domain; the sequence is KLDILFGFIR…GKKTSIRNQL (155 aa). Residues 483-513 are disordered; the sequence is GKLKNHSQSQKDYNSSTSLDSSEESEVDVEN. A phosphoserine mark is found at serine 500, serine 503, serine 504, and serine 545. The disordered stretch occupies residues 652 to 712; the sequence is KQLEKKRRRQ…DNDERDHGGI (61 aa). The span at 692–711 shows a compositional bias: basic and acidic residues; it reads ETSKKQKKWFEDNDERDHGG.

The protein belongs to the DEAD box helicase family. DDX10/DBP4 subfamily. Interacts with the U3 and U14 snoRNAs. Associates with pre-ribosomal complexes.

Its subcellular location is the nucleus. It localises to the nucleolus. The catalysed reaction is ATP + H2O = ADP + phosphate + H(+). ATP-dependent RNA helicase required for ribosome biogenesis. Involved in the release of U14 snoRNA in pre-ribosomal complexes. Required for pre-rRNA cleavage at site A2. This is ATP-dependent RNA helicase dbp4 (dbp4) from Schizosaccharomyces pombe (strain 972 / ATCC 24843) (Fission yeast).